The chain runs to 551 residues: MDDPSIASGFQQGTGRTTGANGTQIQREGLDGLLRQYPIQCIGTSLLVALLTTIIIYYSSSSSFPSATIKKTPPIPEINPLGGIFYPSKTKAAITAYLTNARGLVTDFFRQNPGKLAAQLHTQIGTIIVLASSTAEEIAHDERFHLRKQTAKTFNAHLPGFEVFRDDYNNHLMKNVVTKYFNKQLTKVTGILAHEMDLALGELFTTAKEGQQWTEIPLHATALQIVARLSGRVFLGEDLGRDPEWLRITAGYAGVVTMAFADLSKWPAWLRSTANRFLPRCKASREYMDGVRRKLRPVIAQRRKERRTSSREYREYNDAIEWFELESNGNAYDPEIVQLSLSLAAIHTAGDLLAQTLTEVATHCEIIEPLKEEMRGILAKGGWQKSSLDKMILLDSVIKESQRRKPLATLSMGRIAVTDAKLSDGTVVPKDSTVSIDAGLMWDPSIYAQPDEWDPYRFVRQRKGSLEKQRLAELTTTAPEHLAFGHGMHACPGRFFAANEVKIAMIKILLGYDIKFADGVEPKVMVHGITLDPDRRVRLSIWRREDGHGGF.

The interval 1–23 (MDDPSIASGFQQGTGRTTGANGT) is disordered. The segment covering 8–23 (SGFQQGTGRTTGANGT) has biased composition (polar residues). An N-linked (GlcNAc...) asparagine glycan is attached at N21. A helical transmembrane segment spans residues 41–57 (CIGTSLLVALLTTIIIY). A heme-binding site is contributed by C491.

This sequence belongs to the cytochrome P450 family. Requires heme as cofactor.

Its subcellular location is the membrane. Its pathway is antibiotic biosynthesis. Its function is as follows. Cytochrome P450 monooxygenase; part of the gene cluster that mediates the biosynthesis of sordarin and hypoxysordarin, glycoside antibiotics with a unique tetracyclic diterpene aglycone structure. First, the geranylgeranyl diphosphate synthase sdnC constructs GGDP from farnesyl diphosphate and isopentenyl diphosphate. The diterpene cyclase sdnA then catalyzes the cyclization of GGDP to afford cycloaraneosene. Cycloaraneosene is then hydroxylated four times by the putative cytochrome P450 monooxygenases sdnB, sdnE, sdnF and sdnH to give a hydroxylated cycloaraneosene derivative such as cycloaraneosene-8,9,13,19-tetraol. Although the order of the hydroxylations is unclear, at least C8, C9 and C13 of the cycloaraneosene skeleton are hydroxylated before the sordaricin formation. Dehydration of the 13-hydroxy group of the hydroxylated cycloaraneosene derivative might be catalyzed by an unassigned hypothetical protein such as sdnG and sdnP to construct the cyclopentadiene moiety. The FAD-dependent oxidoreductase sdnN is proposed to catalyze the oxidation at C9 of the hydroxylated cycloaraneosene derivative and also catalyze the Baeyer-Villiger oxidation to give the lactone intermediate. The presumed lactone intermediate would be hydrolyzed to give an acrolein moiety and a carboxylate moiety. Then, [4+2]cycloaddition would occur between the acrolein moiety and the cyclopentadiene moiety to give sordaricin. SdnN might also be involved in the [4+2]cycloaddition after the hypothesized oxidation to accommodate the oxidized product and prompt the [4+2]cycloaddition. GDP-6-deoxy-D-altrose may be biosynthesized from GDP-D-mannose by the putative GDP-mannose-4,6-dehydratase sdnI and the short-chain dehydrogenase sdnK. The glycosyltransferase sdnJ catalyzes the attachment of 6-deoxy-D-altrose onto the 19-hydroxy group of sordaricin to give 4'-O-demethylsordarin. The methyltransferase sdnD would complete the biosynthesis of sordarin. Sordarin can be further modified into hypoxysordarin. The unique acyl chain at the 3'-hydroxy group of hypoxysordarin would be constructed by an iterative type I PKS sdnO and the trans-acting polyketide methyltransferase sdnL. SdnL would be responsible for the introduction of an alpha-methyl group of the polyketide chain. Alternatively, the beta-lactamase-like protein sdnR might be responsible for the cleavage and transfer of the polyketide chain from the PKS sdnO to sordarin. Two putative cytochrome P450 monooxygenases, sdnQ and sdnT, might catalyze the epoxidations of the polyketide chain to complete the biosynthesis of hypoxysordarin. Transcriptional regulators sdnM and sdnS are presumably encoded for the transcriptional regulation of the expression of the sdn gene cluster. This Sordaria araneosa (Pleurage araneosa) protein is Cytochrome P450 monooxygenase sdnQ.